Reading from the N-terminus, the 374-residue chain is Putative glutamate--cysteine ligase 2-2 (374 aa).

Belongs to the glutamate--cysteine ligase type 2 family. YbdK subfamily.

It carries out the reaction L-cysteine + L-glutamate + ATP = gamma-L-glutamyl-L-cysteine + ADP + phosphate + H(+). ATP-dependent carboxylate-amine ligase which exhibits weak glutamate--cysteine ligase activity. The sequence is that of Putative glutamate--cysteine ligase 2-2 from Rhodococcus jostii (strain RHA1).